The primary structure comprises 590 residues: Arginine--tRNA ligase (590 aa).

The 'HIGH' region motif lies at 126–136 (PNVAKEMHVGH).

This sequence belongs to the class-I aminoacyl-tRNA synthetase family. Monomer.

The protein resides in the cytoplasm. It carries out the reaction tRNA(Arg) + L-arginine + ATP = L-arginyl-tRNA(Arg) + AMP + diphosphate. In Streptomyces avermitilis (strain ATCC 31267 / DSM 46492 / JCM 5070 / NBRC 14893 / NCIMB 12804 / NRRL 8165 / MA-4680), this protein is Arginine--tRNA ligase.